The primary structure comprises 595 residues: Tumor necrosis factor receptor superfamily member 8 (595 aa).

Positions 1–18 are cleaved as a signal peptide; that stretch reads MRVLLAALGLLFLGALRA. Residues 19-385 lie on the Extracellular side of the membrane; the sequence is FPQDRPFEDT…STGKPVLDAG (367 aa). 3 TNFR-Cys repeats span residues 28-66, 68-106, and 107-150; these read TCHGNPSHYYDKAVRRCCYRCPMGLFPTQQCPQRPTDCR, QCEPDYYLDEADRCTACVTCSRDDLVEKTPCAWNSSRVC, and ECRP…TVCE. 8 cysteine pairs are disulfide-bonded: C29–C44, C45–C58, C48–C65, C69–C81, C84–C98, C87–C106, C108–C122, and C131–C149. N-linked (GlcNAc...) asparagine glycosylation is present at N32. A glycan (N-linked (GlcNAc...) asparagine) is linked at N101. Residues 167-238 form a disordered region; that stretch reads KEPSSGTIPQ…PTQPCPEGSG (72 aa). Low complexity predominate over residues 179–194; it reads PTPVSPATSSASTMPV. TNFR-Cys repeat units lie at residues 205–241, 243–281, and 282–325; these read ASKLTRAPDSPSSVGRPSSDPGLSPTQPCPEGSGDCR, QCEPDYYLDEAGRCTACVSCSRDDLVEKTPCAWNSSRTC, and ECRP…TTFE. 6 cysteine pairs are disulfide-bonded: C233–C240, C244–C256, C259–C273, C262–C281, C283–C297, and C289–C300. An N-linked (GlcNAc...) asparagine glycan is attached at N276. Residues 323–355 are disordered; that stretch reads TFEAPPLGTQPDCNPTPENGEAPASTSPTQSLL. A glycan (N-linked (GlcNAc...) asparagine) is linked at N336. A compositionally biased stretch (polar residues) spans 346-355; sequence ASTSPTQSLL. Residues 386–406 traverse the membrane as a helical segment; it reads PVLFWVILVLVVVVGSSAFLL. Residues 407-595 lie on the Cytoplasmic side of the membrane; sequence CHRRACRKRI…DPLPTAASGK (189 aa). 2 positions are modified to phosphoserine: S438 and S452. Disordered regions lie at residues 438-457, 485-509, and 536-595; these read SRPRRSSTQLRSGASVTEPV, LQDASPAGGPSSPRDLPEPRVSTEH, and EGRG…ASGK. Polar residues predominate over residues 443 to 452; sequence SSTQLRSGAS. A compositionally biased stretch (basic and acidic residues) spans 499–509; the sequence is DLPEPRVSTEH.

Belongs to the TNFR8 family. Interacts with TRAF1, TRAF2, TRAF3 and TRAF5. In terms of processing, phosphorylated on serine and tyrosine residues. Isoform 2 is constitutively phosphorylated. As to expression, detected in alveolar macrophages (at protein level).

Its subcellular location is the cell membrane. The protein localises to the cytoplasm. In terms of biological role, receptor for TNFSF8/CD30L. May play a role in the regulation of cellular growth and transformation of activated lymphoblasts. Regulates gene expression through activation of NF-kappa-B. This chain is Tumor necrosis factor receptor superfamily member 8, found in Homo sapiens (Human).